We begin with the raw amino-acid sequence, 345 residues long: Glycerol-3-phosphate dehydrogenase [NAD(P)+] (345 aa).

Positions 11, 12, 32, 33, and 106 each coordinate NADPH. Sn-glycerol 3-phosphate is bound by residues lysine 106, glycine 137, and serine 139. Alanine 141 serves as a coordination point for NADPH. Sn-glycerol 3-phosphate contacts are provided by lysine 192, aspartate 245, serine 255, arginine 256, and asparagine 257. Lysine 192 (proton acceptor) is an active-site residue. Arginine 256 is a binding site for NADPH. NADPH-binding residues include valine 280 and glutamate 282.

This sequence belongs to the NAD-dependent glycerol-3-phosphate dehydrogenase family.

Its subcellular location is the cytoplasm. It carries out the reaction sn-glycerol 3-phosphate + NAD(+) = dihydroxyacetone phosphate + NADH + H(+). The catalysed reaction is sn-glycerol 3-phosphate + NADP(+) = dihydroxyacetone phosphate + NADPH + H(+). Its pathway is membrane lipid metabolism; glycerophospholipid metabolism. Does not seem to be inhibited by sn-glycerol 3-phosphate, in contrast to the E.coli homolog enzyme which is very sensitive to allosteric inhibition by G3P. Its function is as follows. Catalyzes the reduction of the glycolytic intermediate dihydroxyacetone phosphate (DHAP) to sn-glycerol 3-phosphate (G3P), the key precursor for phospholipid synthesis. The chain is Glycerol-3-phosphate dehydrogenase [NAD(P)+] from Bacillus subtilis (strain 168).